The chain runs to 103 residues: Large ribosomal subunit protein uL24 (103 aa).

This sequence belongs to the universal ribosomal protein uL24 family. As to quaternary structure, part of the 50S ribosomal subunit.

In terms of biological role, one of two assembly initiator proteins, it binds directly to the 5'-end of the 23S rRNA, where it nucleates assembly of the 50S subunit. Functionally, one of the proteins that surrounds the polypeptide exit tunnel on the outside of the subunit. The protein is Large ribosomal subunit protein uL24 of Glaesserella parasuis serovar 5 (strain SH0165) (Haemophilus parasuis).